The sequence spans 511 residues: Bifunctional purine biosynthesis protein PurH (511 aa).

Positions 1 to 145 (MKQRALVSVS…KNHKFVSVIV (145 aa)) constitute an MGS-like domain.

Belongs to the PurH family.

The enzyme catalyses (6R)-10-formyltetrahydrofolate + 5-amino-1-(5-phospho-beta-D-ribosyl)imidazole-4-carboxamide = 5-formamido-1-(5-phospho-D-ribosyl)imidazole-4-carboxamide + (6S)-5,6,7,8-tetrahydrofolate. The catalysed reaction is IMP + H2O = 5-formamido-1-(5-phospho-D-ribosyl)imidazole-4-carboxamide. The protein operates within purine metabolism; IMP biosynthesis via de novo pathway; 5-formamido-1-(5-phospho-D-ribosyl)imidazole-4-carboxamide from 5-amino-1-(5-phospho-D-ribosyl)imidazole-4-carboxamide (10-formyl THF route): step 1/1. Its pathway is purine metabolism; IMP biosynthesis via de novo pathway; IMP from 5-formamido-1-(5-phospho-D-ribosyl)imidazole-4-carboxamide: step 1/1. This is Bifunctional purine biosynthesis protein PurH from Bacillus cereus (strain AH187).